We begin with the raw amino-acid sequence, 404 residues long: AT-hook motif nuclear-localized protein 3 (404 aa).

3 disordered regions span residues 1–51, 70–100, and 113–133; these read MEER…VPPT, PFSL…PDGT, and SVPL…GKSN. The segment covering 7–19 has biased composition (polar residues); that stretch reads TNINNNITSSFGL. A compositionally biased stretch (pro residues) spans 35 to 51; sequence DPPPRPENPNPFLVPPT. Positions 71–83 are enriched in polar residues; the sequence is FSLTMPTENTSAE. Residues 86–94 carry the Bipartite nuclear localization signal motif; sequence KKKRGRPRK. The a.T hook DNA-binding region spans 86-98; that stretch reads KKKRGRPRKYNPD. The span at 123–133 shows a compositional bias: basic residues; that stretch reads RKRGRGRGKSN. A PPC domain is found at 163 to 308; that stretch reads GANFTPHVLI…RFGAQPSSIS (146 aa). The tract at residues 359 to 404 is disordered; that stretch reads PFSSIPVGGGGGGEVGEEEGEEDDDELEGEDEEFGGDSQSDNEIPS. The span at 373-393 shows a compositional bias: acidic residues; the sequence is VGEEEGEEDDDELEGEDEEFG.

As to quaternary structure, homodimer. Interacts with AHL4. In terms of tissue distribution, expressed in both procambium and xylem precursors of the root meristem. Also detected in the endodermis in the late elongation zone and onwards.

It is found in the nucleus. Transcription factor that specifically binds AT-rich DNA sequences related to the nuclear matrix attachment regions (MARs). Acts redundantly with AHL4 to regulate the formation of tissue boundary between the xylem and procambium in the root meristem. This chain is AT-hook motif nuclear-localized protein 3, found in Arabidopsis thaliana (Mouse-ear cress).